A 465-amino-acid polypeptide reads, in one-letter code: Probable tRNA modification GTPase MnmE (465 aa).

Residues R23, E85, and R124 each contribute to the (6S)-5-formyl-5,6,7,8-tetrahydrofolate site. A TrmE-type G domain is found at 221–384 (GTKVCIIGKP…LNNCILDLSS (164 aa)). Residues 231-236 (NVGKSS), 250-256 (TNFPGTT), and 275-278 (DTAG) contribute to the GTP site. Mg(2+) is bound by residues S235 and T256. K465 serves as a coordination point for (6S)-5-formyl-5,6,7,8-tetrahydrofolate.

It belongs to the TRAFAC class TrmE-Era-EngA-EngB-Septin-like GTPase superfamily. TrmE GTPase family. It depends on K(+) as a cofactor.

The protein localises to the plastid. Its subcellular location is the chloroplast. Functionally, exhibits a very high intrinsic GTPase hydrolysis rate. Involved in the addition of a carboxymethylaminomethyl (cmnm) group at the wobble position (U34) of certain tRNAs, forming tRNA-cmnm(5)s(2)U34. The polypeptide is Probable tRNA modification GTPase MnmE (Cyanidium caldarium (Red alga)).